The primary structure comprises 35 residues: Somatostatin (35 aa).

A disulfide bond links Cys-24 and Cys-35.

The protein belongs to the somatostatin family.

Its subcellular location is the secreted. In terms of biological role, somatostatin inhibits the release of somatotropin. The polypeptide is Somatostatin (sst) (Lampetra fluviatilis (European river lamprey)).